The primary structure comprises 532 residues: Probable G-protein coupled receptor Mth-like 11 (532 aa).

Residues 1–20 form the signal peptide; sequence MGMFRVEYLLLGILVIGVRS. Residues 21-229 lie on the Extracellular side of the membrane; it reads RDIPNCDFFD…VRKSRLSNAS (209 aa). Disulfide bonds link Cys26-Cys80, Cys82-Cys87, Cys91-Cys184, Cys92-Cys103, and Cys145-Cys204. N-linked (GlcNAc...) asparagine glycosylation is present at Asn42. Residues Asn110, Asn123, Asn166, Asn195, and Asn227 are each glycosylated (N-linked (GlcNAc...) asparagine). A helical membrane pass occupies residues 230 to 250; that stretch reads IPVKFSSVFFMVITIAAYLWL. Residues 251 to 262 are Cytoplasmic-facing; the sequence is PKFRSLHGKCCN. A helical transmembrane segment spans residues 263-283; sequence LYFICLAITFLLNVISLFGIF. The Extracellular portion of the chain corresponds to 284–290; sequence ELKTPIC. Residues 291-311 traverse the membrane as a helical segment; sequence YLTGYAGYFTVMATFLWLSVI. Topologically, residues 312–339 are cytoplasmic; that stretch reads SFDVWRRFAMRKFQVFYKNKRSSFFNYN. Residues 340-360 traverse the membrane as a helical segment; it reads IIVWSSAGLLTCIIFLVDQFV. Topologically, residues 361-386 are extracellular; sequence ETNLDNPYNPAVGVFSCWIFTNGWSA. Residues 387–407 form a helical membrane-spanning segment; sequence TFYFYAPLAILIILNCASFFL. The Cytoplasmic portion of the chain corresponds to 408–439; sequence TTRYIYVENKQNQKVLNNSEPQKLSRNHANYR. A helical membrane pass occupies residues 440–460; sequence IYFRLFIIMGGSWFLEIIAFI. The Extracellular portion of the chain corresponds to 461-469; that stretch reads CEMENMWKP. A helical membrane pass occupies residues 470–490; that stretch reads LIILNDYINCSQGIIIFVATF. Topologically, residues 491–532 are cytoplasmic; the sequence is CNHEMFRLIRKRIQNRNITSLELTNTSRPVESEKMADVELGK.

Belongs to the G-protein coupled receptor 2 family. Mth subfamily.

The protein resides in the cell membrane. The protein is Probable G-protein coupled receptor Mth-like 11 (mthl11) of Drosophila melanogaster (Fruit fly).